The following is a 168-amino-acid chain: Cyclin-dependent kinase 4 inhibitor C (168 aa).

ANK repeat units follow at residues 4-33 (PWGN…NVNA), 37-65 (FGRT…NPDL), 69-98 (TGFA…DVNI), and 102-132 (EGNL…NVGH).

Belongs to the CDKN2 cyclin-dependent kinase inhibitor family. Heterodimer of p18 with CDK6. As to expression, highest levels found in skeletal muscle. Also found in pancreas and heart.

Functionally, interacts strongly with CDK6, weakly with CDK4. Inhibits cell growth and proliferation with a correlated dependence on endogenous retinoblastoma protein RB. The protein is Cyclin-dependent kinase 4 inhibitor C (CDKN2C) of Homo sapiens (Human).